A 78-amino-acid chain; its full sequence is Sec-independent protein translocase protein TatA (78 aa).

The helical transmembrane segment at 1 to 21 (MGSLSIWHWIVVVAVILLLFG) threads the bilayer. Basic and acidic residues predominate over residues 43–55 (MKDDEKTAEKPEP). Residues 43–78 (MKDDEKTAEKPEPVKTINHNADGSGAARSDTGSKVI) are disordered.

The protein belongs to the TatA/E family. As to quaternary structure, the Tat system comprises two distinct complexes: a TatABC complex, containing multiple copies of TatA, TatB and TatC subunits, and a separate TatA complex, containing only TatA subunits. Substrates initially bind to the TatABC complex, which probably triggers association of the separate TatA complex to form the active translocon.

It is found in the cell inner membrane. In terms of biological role, part of the twin-arginine translocation (Tat) system that transports large folded proteins containing a characteristic twin-arginine motif in their signal peptide across membranes. TatA could form the protein-conducting channel of the Tat system. The chain is Sec-independent protein translocase protein TatA from Nitrobacter winogradskyi (strain ATCC 25391 / DSM 10237 / CIP 104748 / NCIMB 11846 / Nb-255).